Consider the following 63-residue polypeptide: Sec-independent protein translocase protein TatA (63 aa).

A helical membrane pass occupies residues 1–21 (MGSLSMWHWLIVLVIVLLLFG). Positions 43–63 (MTDEDAPETAKTVDHKADETK) are disordered. Over residues 53–63 (KTVDHKADETK) the composition is skewed to basic and acidic residues.

The protein belongs to the TatA/E family. The Tat system comprises two distinct complexes: a TatABC complex, containing multiple copies of TatA, TatB and TatC subunits, and a separate TatA complex, containing only TatA subunits. Substrates initially bind to the TatABC complex, which probably triggers association of the separate TatA complex to form the active translocon.

Its subcellular location is the cell inner membrane. In terms of biological role, part of the twin-arginine translocation (Tat) system that transports large folded proteins containing a characteristic twin-arginine motif in their signal peptide across membranes. TatA could form the protein-conducting channel of the Tat system. This is Sec-independent protein translocase protein TatA from Rhizobium etli (strain ATCC 51251 / DSM 11541 / JCM 21823 / NBRC 15573 / CFN 42).